Consider the following 113-residue polypeptide: N(2)-fixation sustaining protein CowN (113 aa).

The protein belongs to the CowN family.

Is required to sustain N(2)-dependent growth in the presence of low levels of carbon monoxide (CO). Probably acts by protecting the N(2) fixation ability of the nitrogenase complex, which is inactivated in the presence of CO. This is N(2)-fixation sustaining protein CowN from Wolinella succinogenes (strain ATCC 29543 / DSM 1740 / CCUG 13145 / JCM 31913 / LMG 7466 / NCTC 11488 / FDC 602W) (Vibrio succinogenes).